The chain runs to 225 residues: MSRIGQVCEAFRENHWEPATIISENGSLSVTVRYEDGETEELISNLVRNSELGHPEVKKEETTQQPEKGEGMAEPKIEGTCLDHFRWYNTITEKRPDNSKLFPVVSALMAVQYDKEGTYGSSWVGKGEHRGIMPNIDRKYDRLDTMTANEIEGKAKTLAQLESSFDSMNSNEKEALHESKIDAVADLANYCLLYMTFIKDNFPKMYNAWFEKNVPQYLRDKFPRL.

The tract at residues 48-73 is disordered; sequence RNSELGHPEVKKEETTQQPEKGEGMA. Basic and acidic residues predominate over residues 51–73; sequence ELGHPEVKKEETTQQPEKGEGMA.

In terms of biological role, essential for DNA synthesis. This chain is Gene 30 protein (30), found in Bacillus phage SP01 (Bacteriophage SP01).